The following is a 267-amino-acid chain: Chaperone protein MyfB (267 aa).

The signal sequence occupies residues 1-34 (MKYKFSHNFISYNLFLFVFMSLILLPYSHASSMG). The cysteines at positions 127 and 164 are disulfide-linked.

This sequence belongs to the periplasmic pilus chaperone family.

Its subcellular location is the periplasm. Required for the biogenesis of the MyfA fimbria. The chain is Chaperone protein MyfB (myfB) from Yersinia enterocolitica.